The following is a 447-amino-acid chain: UPF0210 protein Ldb1026 (447 aa).

It belongs to the UPF0210 family. Homodimer.

This is UPF0210 protein Ldb1026 from Lactobacillus delbrueckii subsp. bulgaricus (strain ATCC 11842 / DSM 20081 / BCRC 10696 / JCM 1002 / NBRC 13953 / NCIMB 11778 / NCTC 12712 / WDCM 00102 / Lb 14).